The primary structure comprises 283 residues: Zip homologous protein 4 (283 aa).

The segment at 6 to 50 (CFRCYKFPSKQIEFYLTNCMHMFCIECERLCHPPEEEPLKCIQCS) adopts an RING-type zinc-finger fold. 2 disordered regions span residues 149–175 (KKQLAEQAPPPQTPPRSNSLKVASSRS) and 201–283 (TKAQ…RNSQ). The span at 163-175 (PRSNSLKVASSRS) shows a compositional bias: polar residues. The span at 202-216 (KAQAKAEAEAEAPAK) shows a compositional bias: low complexity. Polar residues predominate over residues 220-235 (SKAQTTKCTSNYQSHP). Residues 267–283 (KKHEAQREKHKEHRNSQ) are compositionally biased toward basic and acidic residues.

As to quaternary structure, interacts with zhp-3; the interaction is required for their localization along paired chromosomes and stability, and for the formation of chiasma during meiotic recombination. As to expression, expressed in the germline.

It is found in the chromosome. In terms of biological role, recruited co-dependently with zhp-3 to the synaptonemal complex between homologous chromosome pairs to regulate the formation and number of crossover events between homologs during meiotic recombination. In the early stages of pachytene, in complex with zhp-4, recruited by the zhp-1-zhp-2 heterodimer to designated crossover sites along the recombination intermediate to stabilize other pro-crossover factors such as rmh-1, msh-5 and cosa-1. This in turn facilitates crossover and promotes the formation of chiasma in each meiotic nucleus at the late pachytene stage of meiosis. Negatively regulates double strand break formation to promote formation of the crossover intermediate. This is Zip homologous protein 4 from Caenorhabditis elegans.